The following is a 634-amino-acid chain: Probable potassium transport system protein Kup 2 (634 aa).

The next 12 membrane-spanning stretches (helical) occupy residues 20-40 (FWTL…TSPL), 64-84 (VLSL…VLLI), 110-130 (FAAI…DAII), 148-168 (PGFD…LFLV), 174-194 (AAVA…MAVA), 224-244 (AGLL…ALYA), 258-278 (WLVL…AMLL), 290-310 (LLFP…ATII), 348-368 (IYIP…VFAF), 377-397 (AYGI…FFVM), 405-425 (AAVA…FLMA), and 430-450 (IVDG…VMVT).

This sequence belongs to the HAK/KUP transporter (TC 2.A.72) family.

It localises to the cell inner membrane. The enzyme catalyses K(+)(in) + H(+)(in) = K(+)(out) + H(+)(out). Functionally, transport of potassium into the cell. Likely operates as a K(+):H(+) symporter. The polypeptide is Probable potassium transport system protein Kup 2 (Rhodopseudomonas palustris (strain ATCC BAA-98 / CGA009)).